A 650-amino-acid chain; its full sequence is Macrolide export ATP-binding/permease protein MacB (650 aa).

In terms of domain architecture, ABC transporter spans 9-248 (IELIDLERVF…RPLGRPPGGA (240 aa)). 45–52 (GQSGSGKS) serves as a coordination point for ATP. The next 4 membrane-spanning stretches (helical) occupy residues 276-296 (ALTL…MAIG), 525-545 (LTLL…IGVM), 580-600 (AVAV…GAAL), and 615-635 (PPIV…YLPA).

This sequence belongs to the ABC transporter superfamily. Macrolide exporter (TC 3.A.1.122) family. Homodimer.

Its subcellular location is the cell inner membrane. Functionally, non-canonical ABC transporter that contains transmembrane domains (TMD), which form a pore in the inner membrane, and an ATP-binding domain (NBD), which is responsible for energy generation. Confers resistance against macrolides. The sequence is that of Macrolide export ATP-binding/permease protein MacB from Rhodospirillum rubrum (strain ATCC 11170 / ATH 1.1.1 / DSM 467 / LMG 4362 / NCIMB 8255 / S1).